The sequence spans 440 residues: MEIVTVALIAIVFTTFLYLIVRESSPNGLPPGPKPWPIVGNLLQLGEKPHSQFAQLAETYGDLFTLKLGTQTVVVASTPLAASEVLKAHDRTLCGRYVFQSFRVKNHVENSIVWNECNETWKKLRKVCRTQLFTQKMIENQAEVREIKTMEMVKYLKKNEGIEVKIVEVIFGTLVNMFGNLIFSQDIFKLGDESSGSLEMKQHIWRMLELGNSANPGDYVPLLGSLDLFGQRKDVADCLQGVYGVWGAMLKERRIAKRQINGDTKNDFVDVLLDSGLDDQQINSLLLDMFSAGTETTASTIEWALTELTKNPQVTADIRSELLSVVGKRAVKESDILNLPYLQAFVKETLRLHPPTPLLIPRRALETCQVLNYTIPKECQIMVNAWGIGRDPKTWTDPLKFSPDRFLNSSIDFKGNDFELIPFGAGRRICPGVPPGNSVY.

A helical; Signal-anchor for type II membrane protein transmembrane segment spans residues 2–21 (EIVTVALIAIVFTTFLYLIV). Heme is bound at residue C430.

The protein belongs to the cytochrome P450 family. It depends on heme as a cofactor.

The protein resides in the membrane. Functionally, involved in the biosynthesis of benzylisoquinoline alkaloids. Probably involved in papaverine biosynthesis since its transcripts are abundant only in cultivars with substantial papaverine accumulation. May catalyze the 3'-hydroxylation of (S)-coclaurine. The chain is (S)-N-methylcoclaurine 3'-hydroxylase-like protein from Papaver somniferum (Opium poppy).